The primary structure comprises 296 residues: NAD kinase (296 aa).

The active-site Proton acceptor is the aspartate 73. NAD(+) is bound by residues 73 to 74 (DG), lysine 78, 151 to 152 (NE), arginine 178, aspartate 180, and 191 to 196 (TAHAMS).

It belongs to the NAD kinase family. It depends on a divalent metal cation as a cofactor.

It localises to the cytoplasm. The enzyme catalyses NAD(+) + ATP = ADP + NADP(+) + H(+). Its function is as follows. Involved in the regulation of the intracellular balance of NAD and NADP, and is a key enzyme in the biosynthesis of NADP. Catalyzes specifically the phosphorylation on 2'-hydroxyl of the adenosine moiety of NAD to yield NADP. The sequence is that of NAD kinase from Francisella tularensis subsp. tularensis (strain WY96-3418).